Reading from the N-terminus, the 136-residue chain is Methylglyoxal synthase (136 aa).

The MGS-like domain maps to 1 to 136; it reads MKIALIAHDR…REVVREENEA (136 aa). Substrate is bound by residues H8, K12, 34–37, and 54–55; these read TGTT and SG. The Proton donor/acceptor role is filled by D60. Residue H87 participates in substrate binding.

The protein belongs to the methylglyoxal synthase family.

It carries out the reaction dihydroxyacetone phosphate = methylglyoxal + phosphate. Functionally, catalyzes the formation of methylglyoxal from dihydroxyacetone phosphate. The protein is Methylglyoxal synthase of Brevibacillus brevis (strain 47 / JCM 6285 / NBRC 100599).